A 186-amino-acid polypeptide reads, in one-letter code: Protein GrpE (186 aa).

Residues 1–15 show a composition bias toward polar residues; sequence MADEQQTLDQQTPEQ. Positions 1-20 are disordered; the sequence is MADEQQTLDQQTPEQPTGAA.

This sequence belongs to the GrpE family. As to quaternary structure, homodimer.

Its subcellular location is the cytoplasm. In terms of biological role, participates actively in the response to hyperosmotic and heat shock by preventing the aggregation of stress-denatured proteins, in association with DnaK and GrpE. It is the nucleotide exchange factor for DnaK and may function as a thermosensor. Unfolded proteins bind initially to DnaJ; upon interaction with the DnaJ-bound protein, DnaK hydrolyzes its bound ATP, resulting in the formation of a stable complex. GrpE releases ADP from DnaK; ATP binding to DnaK triggers the release of the substrate protein, thus completing the reaction cycle. Several rounds of ATP-dependent interactions between DnaJ, DnaK and GrpE are required for fully efficient folding. The chain is Protein GrpE from Pseudomonas aeruginosa (strain UCBPP-PA14).